The chain runs to 411 residues: LIM domain-binding protein 1 (411 aa).

Ser-2 is modified (N-acetylserine). Thr-61 is subject to Phosphothreonine. Phosphoserine is present on residues Ser-265 and Ser-302. Disordered stretches follow at residues 283-330 and 367-411; these read APPA…TFAL and DAAN…QASQ. The segment covering 302–318 has biased composition (low complexity); sequence SGGSTMSSGGGNTNNSN. The 40-residue stretch at 336-375 folds into the LIM interaction domain (LID) domain; the sequence is DVMVVGEPTLMGGEFGDEDERLITRLENTQFDAANGIDDE.

This sequence belongs to the LDB family. As to quaternary structure, interacts with ESR1. Forms homodimers and heterodimers. Interacts with and activates LHX1/LIM1. Interacts with the LIM domains of ISL1 and LMO2. Can assemble in a complex with LMO2 and TAL1/SCL but does not interact with TAL1/SCL directly. Strongly interacts with the LIM2 domain of LMX1A and more weakly with the LIM1 domain. Homodimerization is not required for, and does not effect, LMX1A-binding. Component of a nuclear TAL-1 complex composed at least of CBFA2T3, LDB1, TAL1 and TCF3. Interacts with LHX6 and LHX9. At neuronal promoters, forms a complex with LHX3 involved in the specification of interneurons, in motor neurons, it is displaced by ISL1 to form a ternary complex in which ISL1 contacts both LHX3 and LDB1. Interacts with SLK; leading to negatively regulate SLK kinase activity. Interacts with YWHAZ. Interacts with PRDM1/BLIMP1. Interacts with LMO4. Interacts with RLIM/RNF12; the interaction inhibits the ubiquitination of LMO proteins. Post-translationally, ubiquitinated by RLIM/RNF12, leading to its degradation by the proteasome. In terms of tissue distribution, expressed in a wide range of adult tissues including brain, heart, skeletal muscle, colon, thymus, spleen, kidney, liver, small intestine, lung and peripheral blood leukocytes.

It localises to the nucleus. Functionally, binds to the LIM domain of a wide variety of LIM domain-containing transcription factors. May regulate the transcriptional activity of LIM-containing proteins by determining specific partner interactions. Plays a role in the development of interneurons and motor neurons in cooperation with LHX3 and ISL1. Acts synergistically with LHX1/LIM1 in axis formation and activation of gene expression. Acts with LMO2 in the regulation of red blood cell development, maintaining erythroid precursors in an immature state. This Homo sapiens (Human) protein is LIM domain-binding protein 1 (LDB1).